Reading from the N-terminus, the 1468-residue chain is Histone-lysine N-methyltransferase, H3 lysine-4 specific (1468 aa).

Over residues 1–11 the composition is skewed to polar residues; it reads MPYSSQQNGYT. Disordered stretches follow at residues 1–439, 636–737, 848–884, 986–1103, and 1141–1162; these read MPYS…RSFG, EHKL…EEYD, SAPS…RKAI, AGAH…TGEE, and PPEA…TDVP. Residues 12 to 26 are compositionally biased toward low complexity; the sequence is SASTSRLSEQTSSHS. Composition is skewed to basic and acidic residues over residues 28–40, 46–89, 99–109, 120–136, 146–166, and 174–215; these read SSRE…EKGR, EARH…DHWR, PRDDRRDEARN, PEHS…ESAH, LDSK…DSGR, and YEYD…RDDS. Residues 225–235 show a composition bias toward basic residues; sequence RRSRSRSRSRS. 2 stretches are compositionally biased toward basic and acidic residues: residues 236-287 and 294-305; these read RSRD…EHST and EDSKDLRHESQR. Polar residues-rich tracts occupy residues 306–315 and 366–376; these read RVSASVQSAS and SAPNGSATAPS. A compositionally biased stretch (basic and acidic residues) spans 396 to 405; that stretch reads PTREKAEEAR. The span at 406-416 shows a compositional bias: low complexity; it reads TSSTRRPSSQT. Residues 417-426 show a composition bias toward polar residues; that stretch reads NDNVNNSRDP. Composition is skewed to low complexity over residues 650-662 and 680-694; these read AAAS…PSTT and PAAP…PASA. The span at 713 to 722 shows a compositional bias: basic and acidic residues; that stretch reads SSYEESRKLA. Residues 849–861 show a composition bias toward polar residues; that stretch reads APSQHAPSQQIRT. Over residues 1012-1024 the composition is skewed to basic residues; the sequence is KKKRGHTHRSKVH. The segment covering 1072–1085 has biased composition (acidic residues); the sequence is SDAEAGTDDVDSTE. Residues 1086 to 1097 are compositionally biased toward polar residues; that stretch reads TDALSRSVSASV. Positions 1293–1298 match the RxxxRR motif motif; it reads RADSRR. One can recognise an SET domain in the interval 1327-1444; sequence KQLKFAKSPI…AGEELTYDYK (118 aa). Y1443 provides a ligand contact to S-adenosyl-L-methionine. Positions 1453-1468 constitute a Post-SET domain; it reads DAIPCLCGSPGCRRFL.

The protein belongs to the class V-like SAM-binding methyltransferase superfamily. Component of the Set1C/COMPASS complex.

Its subcellular location is the nucleus. It localises to the chromosome. It catalyses the reaction L-lysyl(4)-[histone H3] + 3 S-adenosyl-L-methionine = N(6),N(6),N(6)-trimethyl-L-lysyl(4)-[histone H3] + 3 S-adenosyl-L-homocysteine + 3 H(+). It carries out the reaction N(6)-methyl-L-lysyl(4)-[histone H3] + S-adenosyl-L-methionine = N(6),N(6)-dimethyl-L-lysyl(4)-[histone H3] + S-adenosyl-L-homocysteine + H(+). The catalysed reaction is N(6),N(6)-dimethyl-L-lysyl(4)-[histone H3] + S-adenosyl-L-methionine = N(6),N(6),N(6)-trimethyl-L-lysyl(4)-[histone H3] + S-adenosyl-L-homocysteine + H(+). Its function is as follows. Catalytic component of the COMPASS (Set1C) complex that specifically mono-, di- and trimethylates histone H3 to form H3K4me1/2/3. Binds RNAs which might negatively affect its histone methyltransferase activity. COMPASS recognizes ubiquitinated H2B on one face of the nucleosome which stimulates the methylation of H3 on the opposing face. The polypeptide is Histone-lysine N-methyltransferase, H3 lysine-4 specific (SET1) (Mycosarcoma maydis (Corn smut fungus)).